The primary structure comprises 158 residues: Transcription elongation factor GreB (158 aa).

The stretch at 53–75 (KRRLREIDRRVRFLTKRLEVLQI) forms a coiled coil.

It belongs to the GreA/GreB family. GreB subfamily.

Functionally, necessary for efficient RNA polymerase transcription elongation past template-encoded arresting sites. The arresting sites in DNA have the property of trapping a certain fraction of elongating RNA polymerases that pass through, resulting in locked ternary complexes. Cleavage of the nascent transcript by cleavage factors such as GreA or GreB allows the resumption of elongation from the new 3'terminus. GreB releases sequences of up to 9 nucleotides in length. This is Transcription elongation factor GreB from Haemophilus influenzae (strain ATCC 51907 / DSM 11121 / KW20 / Rd).